The sequence spans 462 residues: Glycerol-3-phosphate acyltransferase ATS12, chloroplastic (462 aa).

Residues 1-82 (MFILSSSSST…DKESAQSAAT (82 aa)) constitute a chloroplast transit peptide. Residues 233-238 (HQTEAD) carry the HXXXXD motif motif.

This sequence belongs to the GPAT/DAPAT family.

Its subcellular location is the plastid. It localises to the chloroplast stroma. The catalysed reaction is a fatty acyl-[ACP] + sn-glycerol 3-phosphate = a 1-acyl-sn-glycero-3-phosphate + holo-[ACP]. It catalyses the reaction sn-glycerol 3-phosphate + an acyl-CoA = a 1-acyl-sn-glycero-3-phosphate + CoA. Its pathway is phospholipid metabolism; CDP-diacylglycerol biosynthesis; CDP-diacylglycerol from sn-glycerol 3-phosphate: step 1/3. Esterifies the acyl-group from acyl-acyl carrier proteins (acyl-ACPs) to the sn-1 position of glycerol-3-phosphate. The physiological acyl donors in chloroplasts are acyl-ACPs, but acyl-CoAs are used as artificial donor for in vitro reactions. The enzyme from chilling-resistant plants discriminates against non-fluid palmitic acid and selects oleic acid whereas the enzyme from sensitive plants accepts both fatty acids. Squash is chilling-sensitive. Does not seem to discriminate between the acyl-ACP thioesters 18:1-ACP, 18:0-ACP and 16:0-ACP. Exhibits higher selectivity for 16:0-CoA than 18:1-CoA in vitro. The polypeptide is Glycerol-3-phosphate acyltransferase ATS12, chloroplastic (Cucurbita moschata (Winter crookneck squash)).